Consider the following 91-residue polypeptide: Gene 76 protein (91 aa).

The tract at residues 58 to 81 (ELPSCDESPKGEARRDNDNRDGGK) is disordered.

This is Gene 76 protein (76) from Mycobacterium phage L5 (Mycobacteriophage L5).